The sequence spans 439 residues: uncharacterized protein (439 aa).

28 to 35 is a binding site for ATP; sequence GRRRIGKT.

This is an uncharacterized protein from Methanocaldococcus jannaschii (strain ATCC 43067 / DSM 2661 / JAL-1 / JCM 10045 / NBRC 100440) (Methanococcus jannaschii).